The chain runs to 98 residues: uncharacterized protein (98 aa).

Residues arginine 19 to lysine 31 show a composition bias toward basic residues. The interval arginine 19–serine 47 is disordered.

It belongs to the lymphocryptovirus BNLF2B family.

This is an uncharacterized protein from Epstein-Barr virus (strain AG876) (HHV-4).